The following is a 364-amino-acid chain: UDP-N-acetylglucosamine--N-acetylmuramyl-(pentapeptide) pyrophosphoryl-undecaprenol N-acetylglucosamine transferase (364 aa).

UDP-N-acetyl-alpha-D-glucosamine is bound by residues Thr10 to Gly12, Asn124, Arg161, Ser195, and Gln291.

It belongs to the glycosyltransferase 28 family. MurG subfamily.

It localises to the cell membrane. The enzyme catalyses di-trans,octa-cis-undecaprenyl diphospho-N-acetyl-alpha-D-muramoyl-L-alanyl-D-glutamyl-meso-2,6-diaminopimeloyl-D-alanyl-D-alanine + UDP-N-acetyl-alpha-D-glucosamine = di-trans,octa-cis-undecaprenyl diphospho-[N-acetyl-alpha-D-glucosaminyl-(1-&gt;4)]-N-acetyl-alpha-D-muramoyl-L-alanyl-D-glutamyl-meso-2,6-diaminopimeloyl-D-alanyl-D-alanine + UDP + H(+). The protein operates within cell wall biogenesis; peptidoglycan biosynthesis. In terms of biological role, cell wall formation. Catalyzes the transfer of a GlcNAc subunit on undecaprenyl-pyrophosphoryl-MurNAc-pentapeptide (lipid intermediate I) to form undecaprenyl-pyrophosphoryl-MurNAc-(pentapeptide)GlcNAc (lipid intermediate II). This is UDP-N-acetylglucosamine--N-acetylmuramyl-(pentapeptide) pyrophosphoryl-undecaprenol N-acetylglucosamine transferase from Streptomyces coelicolor (strain ATCC BAA-471 / A3(2) / M145).